Consider the following 102-residue polypeptide: Large ribosomal subunit protein uL24 (102 aa).

It belongs to the universal ribosomal protein uL24 family. Part of the 50S ribosomal subunit.

In terms of biological role, one of two assembly initiator proteins, it binds directly to the 5'-end of the 23S rRNA, where it nucleates assembly of the 50S subunit. One of the proteins that surrounds the polypeptide exit tunnel on the outside of the subunit. The chain is Large ribosomal subunit protein uL24 from Allorhizobium ampelinum (strain ATCC BAA-846 / DSM 112012 / S4) (Agrobacterium vitis (strain S4)).